The following is a 226-amino-acid chain: Aspartyl protease inhibitor (226 aa).

An N-terminal signal peptide occupies residues 1–15 (MKLLFLCALIALTAA). 2 disordered regions span residues 95–116 (GKKGKAVETSSEELPKAPKKPS) and 196–218 (EAKQTTTTEAPELPEEAPEQPNV). A disulfide bond links Cys-131 and Cys-222.

Belongs to the protease inhibitor I33 family.

It is found in the secreted. Its function is as follows. Aspartyl protease inhibitor. This chain is Aspartyl protease inhibitor, found in Parelaphostrongylus tenuis (Meningeal worm).